The primary structure comprises 102 residues: Large ribosomal subunit protein bL21 (102 aa).

Belongs to the bacterial ribosomal protein bL21 family. In terms of assembly, part of the 50S ribosomal subunit. Contacts protein L20.

Its function is as follows. This protein binds to 23S rRNA in the presence of protein L20. The protein is Large ribosomal subunit protein bL21 of Listeria monocytogenes serotype 4b (strain F2365).